The primary structure comprises 248 residues: Tryptophan synthase alpha chain (248 aa).

Active-site proton acceptor residues include Glu-36 and Asp-47.

This sequence belongs to the TrpA family. In terms of assembly, tetramer of two alpha and two beta chains.

It carries out the reaction (1S,2R)-1-C-(indol-3-yl)glycerol 3-phosphate + L-serine = D-glyceraldehyde 3-phosphate + L-tryptophan + H2O. It participates in amino-acid biosynthesis; L-tryptophan biosynthesis; L-tryptophan from chorismate: step 5/5. The alpha subunit is responsible for the aldol cleavage of indoleglycerol phosphate to indole and glyceraldehyde 3-phosphate. The protein is Tryptophan synthase alpha chain of Pyrococcus abyssi (strain GE5 / Orsay).